We begin with the raw amino-acid sequence, 118 residues long: Thioredoxin AMT13 (118 aa).

The 110-residue stretch at 1–110 (MSDNKAIQTL…LEDAIRANLG (110 aa)) folds into the Thioredoxin domain. A disulfide bond links Cys36 and Cys39.

It belongs to the thioredoxin family.

The protein operates within mycotoxin biosynthesis. Thioredoxin; part of the gene clusters that mediate the biosynthesis of AM-toxins, host-selective toxins (HSTs) causing Alternaria blotch on apple, a worldwide distributed disease. AM-toxins are cyclic depsipeptides containing the 3 residues 2-hydroxy-isovaleric acid (2-HIV), dehydroalanine, L-alanine which are common for all 3 AM-toxins I to III. The fourth precursor is L-alpha-amino-methoxyphenyl-valeric acid (L-Amv) for AM-toxin I, L-alpha-amino-phenyl-valeric acid (L-Apv) for AM-toxin II, and L-alpha-amino-hydroxyphenyl-valeric acid (L-Ahv) for AM-toxin III. AM-toxins have two target sites for affecting susceptible apple cells; they cause invagination of the plasma membrane and electrolyte loss and chloroplast disorganization. The non-ribosomal peptide synthetase AMT1 contains 4 catalytic modules and is responsible for activation of each residue in AM-toxin. The aldo-keto reductase AMT2 catalyzes the conversion of 2-keto-isovaleric acid (2-KIV) to 2-hydroxy-isovaleric acid (2-HIV), one of the precursor residues incorporated by AMT1 during AM-toxin biosynthesis, by reduction of its ketone to an alcohol. The cytochrome P450 monooxygenase AMT3 and the thioesterase AMT4 are also important for AM-toxin production, but their exact function within the AM-toxin biosynthesis are not known yet. Up to 21 proteins (including AMT1 to AMT4) are predicted to be involved in AM-toxin biosynthesis since their expression ishighly up-regulated in AM-toxin-producing cultures. The chain is Thioredoxin AMT13 from Alternaria alternata (Alternaria rot fungus).